Consider the following 308-residue polypeptide: Ribosomal RNA small subunit methyltransferase H (308 aa).

Residues 36 to 38, Asp-55, Phe-86, Asp-103, and Gln-110 contribute to the S-adenosyl-L-methionine site; that span reads GGH.

Belongs to the methyltransferase superfamily. RsmH family.

Its subcellular location is the cytoplasm. It carries out the reaction cytidine(1402) in 16S rRNA + S-adenosyl-L-methionine = N(4)-methylcytidine(1402) in 16S rRNA + S-adenosyl-L-homocysteine + H(+). Specifically methylates the N4 position of cytidine in position 1402 (C1402) of 16S rRNA. This chain is Ribosomal RNA small subunit methyltransferase H, found in Helicobacter pylori (strain P12).